A 377-amino-acid chain; its full sequence is Protein FAM199X-B (377 aa).

The span at 240–254 (KEHSPRQRCTRESWK) shows a compositional bias: basic and acidic residues. The segment at 240 to 350 (KEHSPRQRCT…EQRQARKERI (111 aa)) is disordered. Positions 256–301 (TSYSTASTSGVSGASVSSSSASMVSTASSTGSSGGNSASNSSANMS) are enriched in low complexity. A compositionally biased stretch (basic residues) spans 319–338 (DSKKRSKQRKLQQKALRKRQ). Residues 321–349 (KKRSKQRKLQQKALRKRQLKEQRQARKER) are a coiled coil. The segment covering 339–350 (LKEQRQARKERI) has biased composition (basic and acidic residues).

Belongs to the FAM199 family.

The protein is Protein FAM199X-B (fam199x-b) of Xenopus laevis (African clawed frog).